A 64-amino-acid polypeptide reads, in one-letter code: Beta-defensin 13 (64 aa).

Positions 1–22 (MRIFSLIVAGLVLLIQLYPAWG) are cleaved as a signal peptide. 3 disulfide bridges follow: Cys-30-Cys-57, Cys-37-Cys-51, and Cys-41-Cys-58.

Belongs to the beta-defensin family. Expressed in testis and to a lesser extent in epididymis (caput, corpus and cauda). Also weakly expressed in kidneys.

The protein resides in the secreted. Has antibacterial activity. The sequence is that of Beta-defensin 13 (Defb13) from Mus musculus (Mouse).